The sequence spans 638 residues: 1-deoxy-D-xylulose-5-phosphate synthase (638 aa).

Residues His79 and Ala120 to Ser122 each bind thiamine diphosphate. Position 151 (Asp151) interacts with Mg(2+). Thiamine diphosphate is bound by residues Gly152–Ala153, Asn180, Tyr289, and Glu371. Residue Asn180 participates in Mg(2+) binding.

Belongs to the transketolase family. DXPS subfamily. As to quaternary structure, homodimer. The cofactor is Mg(2+). Thiamine diphosphate serves as cofactor.

It catalyses the reaction D-glyceraldehyde 3-phosphate + pyruvate + H(+) = 1-deoxy-D-xylulose 5-phosphate + CO2. The protein operates within metabolic intermediate biosynthesis; 1-deoxy-D-xylulose 5-phosphate biosynthesis; 1-deoxy-D-xylulose 5-phosphate from D-glyceraldehyde 3-phosphate and pyruvate: step 1/1. Catalyzes the acyloin condensation reaction between C atoms 2 and 3 of pyruvate and glyceraldehyde 3-phosphate to yield 1-deoxy-D-xylulose-5-phosphate (DXP). The protein is 1-deoxy-D-xylulose-5-phosphate synthase of Rhizobium leguminosarum bv. trifolii (strain WSM2304).